Consider the following 240-residue polypeptide: Large ribosomal subunit protein uL2 (240 aa).

Residues 200–240 (HPFGGGGRQHPGKPKSISRNAPPGRKVGDIASKRTGRGGNE) are disordered.

It belongs to the universal ribosomal protein uL2 family. Part of the 50S ribosomal subunit. Forms a bridge to the 30S subunit in the 70S ribosome. Interacts weakly with protein L37Ae.

Its function is as follows. One of the primary rRNA binding proteins. Required for association of the 30S and 50S subunits to form the 70S ribosome, for tRNA binding and peptide bond formation. It has been suggested to have peptidyltransferase activity; this is somewhat controversial. Makes several contacts with the 16S rRNA in the 70S ribosome. In Haloarcula marismortui (strain ATCC 43049 / DSM 3752 / JCM 8966 / VKM B-1809) (Halobacterium marismortui), this protein is Large ribosomal subunit protein uL2 (rpl2).